Here is a 316-residue protein sequence, read N- to C-terminus: HPr kinase/phosphorylase (316 aa).

Residues histidine 143 and lysine 164 contribute to the active site. Residue 158–165 (GEAGSGKS) participates in ATP binding. Residue serine 165 coordinates Mg(2+). Catalysis depends on aspartate 182, which acts as the Proton acceptor; for phosphorylation activity. Proton donor; for dephosphorylation activity. The interval 206–215 (LEVRGLGVLN) is important for the catalytic mechanism of both phosphorylation and dephosphorylation. Residue glutamate 207 coordinates Mg(2+). The active site involves arginine 251. The interval 272–277 (PVMPGR) is important for the catalytic mechanism of dephosphorylation.

It belongs to the HPrK/P family. In terms of assembly, homohexamer. The cofactor is Mg(2+).

It carries out the reaction [HPr protein]-L-serine + ATP = [HPr protein]-O-phospho-L-serine + ADP + H(+). The enzyme catalyses [HPr protein]-O-phospho-L-serine + phosphate + H(+) = [HPr protein]-L-serine + diphosphate. Catalyzes the ATP- as well as the pyrophosphate-dependent phosphorylation of a specific serine residue in HPr, a phosphocarrier protein of the phosphoenolpyruvate-dependent sugar phosphotransferase system (PTS). HprK/P also catalyzes the pyrophosphate-producing, inorganic phosphate-dependent dephosphorylation (phosphorolysis) of seryl-phosphorylated HPr (P-Ser-HPr). This Xylella fastidiosa (strain 9a5c) protein is HPr kinase/phosphorylase.